The following is a 414-amino-acid chain: Esterase FrsA (414 aa).

This sequence belongs to the FrsA family.

It carries out the reaction a carboxylic ester + H2O = an alcohol + a carboxylate + H(+). Catalyzes the hydrolysis of esters. The chain is Esterase FrsA from Klebsiella pneumoniae (strain 342).